Consider the following 411-residue polypeptide: Cytochrome P450 monooxygenase sirE (411 aa).

N-linked (GlcNAc...) asparagine glycans are attached at residues Asn-12 and Asn-149. A helical transmembrane segment spans residues 181–203 (FLNVISIFTVMMASLNVLYDILA). A glycan (N-linked (GlcNAc...) asparagine) is linked at Asn-342. Heme is bound at residue Cys-352.

Belongs to the cytochrome P450 family. The cofactor is heme.

The protein localises to the membrane. Its pathway is mycotoxin biosynthesis. Its function is as follows. Cytochrome P450 monooxygenase; part of the gene cluster that mediates the biosynthesis of sirodesmin PL, an epipolythiodioxopiperazine (ETP) characterized by a disulfide bridged cyclic dipeptide and that acts as a phytotoxin which is involved in the blackleg didease of canola. SirD catalyzes the O-prenylation of L-tyrosine (L-Tyr) in the presence of dimethylallyl diphosphate (DMAPP) to yield 4-O-dimethylallyl-L-Tyr, and therefore represents probably the first pathway-specific enzyme in the biosynthesis of sirodesmin PL. 4-O-dimethylallyl-L-Tyr, then undergoes condensation with L-Ser in a reaction catalyzed by the non-ribosomal peptide synthase sirP to form the diketopiperazine (DKP) backbone. Further bishydroxylation of the DKP performed by the cytochrome P450 monooxygenase sirC leads to the production of the intermediate phomamide. This step is essential to form the reactive thiol group required for toxicity of sirodesmin PL. The next steps of sirodesmin biosynthesis are not well understood yet, but some predictions could be made from intermediate compounds identification. Phomamide is converted into phomalizarine via oxidation, probably by sirT. Further oxidation, methylation (by sirM or sirN) and reduction steps convert phomalizarine to deacetyl sirodesmin. Finally, acetyltransferase sirH probably acetylates deacetyl sirodesmin to produce sirodesmin PL. This is Cytochrome P450 monooxygenase sirE from Leptosphaeria maculans (Blackleg fungus).